A 340-amino-acid polypeptide reads, in one-letter code: S-adenosylmethionine:tRNA ribosyltransferase-isomerase (340 aa).

It belongs to the QueA family. In terms of assembly, monomer.

The protein resides in the cytoplasm. The enzyme catalyses 7-aminomethyl-7-carbaguanosine(34) in tRNA + S-adenosyl-L-methionine = epoxyqueuosine(34) in tRNA + adenine + L-methionine + 2 H(+). It functions in the pathway tRNA modification; tRNA-queuosine biosynthesis. In terms of biological role, transfers and isomerizes the ribose moiety from AdoMet to the 7-aminomethyl group of 7-deazaguanine (preQ1-tRNA) to give epoxyqueuosine (oQ-tRNA). In Macrococcus caseolyticus (strain JCSC5402) (Macrococcoides caseolyticum), this protein is S-adenosylmethionine:tRNA ribosyltransferase-isomerase.